The sequence spans 79 residues: Exodeoxyribonuclease 7 small subunit (79 aa).

This sequence belongs to the XseB family. Heterooligomer composed of large and small subunits.

It is found in the cytoplasm. It catalyses the reaction Exonucleolytic cleavage in either 5'- to 3'- or 3'- to 5'-direction to yield nucleoside 5'-phosphates.. Its function is as follows. Bidirectionally degrades single-stranded DNA into large acid-insoluble oligonucleotides, which are then degraded further into small acid-soluble oligonucleotides. This Haemophilus influenzae (strain PittGG) protein is Exodeoxyribonuclease 7 small subunit.